The following is an 82-amino-acid chain: Small ribosomal subunit protein bS16 (82 aa).

Belongs to the bacterial ribosomal protein bS16 family.

The protein is Small ribosomal subunit protein bS16 of Aliivibrio fischeri (strain ATCC 700601 / ES114) (Vibrio fischeri).